A 377-amino-acid polypeptide reads, in one-letter code: Nitric oxide reductase FlRd-NAD(+) reductase (377 aa).

The protein belongs to the FAD-dependent oxidoreductase family. It depends on FAD as a cofactor.

It is found in the cytoplasm. It catalyses the reaction 2 reduced [nitric oxide reductase rubredoxin domain] + NAD(+) + H(+) = 2 oxidized [nitric oxide reductase rubredoxin domain] + NADH. It functions in the pathway nitrogen metabolism; nitric oxide reduction. Its function is as follows. One of at least two accessory proteins for anaerobic nitric oxide (NO) reductase. Reduces the rubredoxin moiety of NO reductase. This Salmonella enteritidis PT4 (strain P125109) protein is Nitric oxide reductase FlRd-NAD(+) reductase.